The primary structure comprises 32 residues: Enolase (32 aa).

It belongs to the enolase family. In terms of assembly, homodimer. Mg(2+) is required as a cofactor.

The protein resides in the cytoplasm. It catalyses the reaction (2R)-2-phosphoglycerate = phosphoenolpyruvate + H2O. Its pathway is carbohydrate degradation; glycolysis; pyruvate from D-glyceraldehyde 3-phosphate: step 4/5. The chain is Enolase from Imperata cylindrica (Cogon grass).